Reading from the N-terminus, the 127-residue chain is Holo-[acyl-carrier-protein] synthase (127 aa).

Residues Asp7 and Glu53 each coordinate Mg(2+).

It belongs to the P-Pant transferase superfamily. AcpS family. It depends on Mg(2+) as a cofactor.

The protein resides in the cytoplasm. It catalyses the reaction apo-[ACP] + CoA = holo-[ACP] + adenosine 3',5'-bisphosphate + H(+). Its function is as follows. Transfers the 4'-phosphopantetheine moiety from coenzyme A to a Ser of acyl-carrier-protein. The polypeptide is Holo-[acyl-carrier-protein] synthase (Herpetosiphon aurantiacus (strain ATCC 23779 / DSM 785 / 114-95)).